An 80-amino-acid chain; its full sequence is Exodeoxyribonuclease 7 small subunit (80 aa).

Belongs to the XseB family. In terms of assembly, heterooligomer composed of large and small subunits.

It is found in the cytoplasm. It catalyses the reaction Exonucleolytic cleavage in either 5'- to 3'- or 3'- to 5'-direction to yield nucleoside 5'-phosphates.. Its function is as follows. Bidirectionally degrades single-stranded DNA into large acid-insoluble oligonucleotides, which are then degraded further into small acid-soluble oligonucleotides. This Escherichia coli O139:H28 (strain E24377A / ETEC) protein is Exodeoxyribonuclease 7 small subunit.